The primary structure comprises 122 residues: Large ribosomal subunit protein uL14 (122 aa).

This sequence belongs to the universal ribosomal protein uL14 family. Part of the 50S ribosomal subunit. Forms a cluster with proteins L3 and L19. In the 70S ribosome, L14 and L19 interact and together make contacts with the 16S rRNA in bridges B5 and B8.

Its function is as follows. Binds to 23S rRNA. Forms part of two intersubunit bridges in the 70S ribosome. This is Large ribosomal subunit protein uL14 from Marinomonas sp. (strain MWYL1).